We begin with the raw amino-acid sequence, 420 residues long: Serine/threonine transporter SstT (420 aa).

The next 9 membrane-spanning stretches (helical) occupy residues 14 to 34, 40 to 60, 71 to 91, 172 to 192, 210 to 230, 283 to 303, 309 to 329, 332 to 352, and 356 to 376; these read IMIGIVIGTTLGFLVPEWTFI, LFVGALKAIAPILVFVLIIAS, YVGSILVVYLLATFLAAVVAV, ITTVVQMIIGIAPIGILGLVF, LLLLIGTMAVVALVVYPAIVF, IPLGATINMGGAAITITIMTL, LGMSVPIYLALLLSIIAAVSA, ASGIAGGSLLLIPLACSLFGI, and IAMQVVGVGFIVGVVQDSIET.

Belongs to the dicarboxylate/amino acid:cation symporter (DAACS) (TC 2.A.23) family.

The protein resides in the cell membrane. It carries out the reaction L-serine(in) + Na(+)(in) = L-serine(out) + Na(+)(out). The enzyme catalyses L-threonine(in) + Na(+)(in) = L-threonine(out) + Na(+)(out). In terms of biological role, involved in the import of serine and threonine into the cell, with the concomitant import of sodium (symport system). This Enterococcus faecalis (strain ATCC 700802 / V583) protein is Serine/threonine transporter SstT.